A 474-amino-acid chain; its full sequence is UDP-N-acetylmuramate--L-alanine ligase (474 aa).

112–118 (GTHGKTT) serves as a coordination point for ATP.

It belongs to the MurCDEF family.

Its subcellular location is the cytoplasm. The enzyme catalyses UDP-N-acetyl-alpha-D-muramate + L-alanine + ATP = UDP-N-acetyl-alpha-D-muramoyl-L-alanine + ADP + phosphate + H(+). It functions in the pathway cell wall biogenesis; peptidoglycan biosynthesis. In terms of biological role, cell wall formation. This Cupriavidus taiwanensis (strain DSM 17343 / BCRC 17206 / CCUG 44338 / CIP 107171 / LMG 19424 / R1) (Ralstonia taiwanensis (strain LMG 19424)) protein is UDP-N-acetylmuramate--L-alanine ligase.